A 307-amino-acid chain; its full sequence is Olfactory receptor 5AC1 (307 aa).

Residues 1-28 (MAEENKILVTHFVLTGLTDHPGLQAPLF) are Extracellular-facing. Residues 29 to 49 (LVFLVIYLITLVGNLGLMALI) form a helical membrane-spanning segment. At 50–56 (WKDPHLH) the chain is on the cytoplasmic side. The chain crosses the membrane as a helical span at residues 57 to 77 (TPIYLFLGSLAFADACTSSSV). Residues 78-99 (TSKMLINFLSKNHMLSMAKCAT) lie on the Extracellular side of the membrane. A disulfide bridge links Cys-97 with Cys-179. Residues 100–120 (QFYFFGSNATTECFLLVVMAY) form a helical membrane-spanning segment. Over 121-143 (DRYVAICNPLLYPVVMSNSLCTQ) the chain is Cytoplasmic. Residues 144–164 (FIGISYFIGFLHSAIHVGLLF) traverse the membrane as a helical segment. Over 165-195 (RLTFCRSNIIHYFYCEILQLFKISCTNPTVN) the chain is Extracellular. Residues 196–216 (ILLIFIFSAFIQVFTFMTLIV) form a helical membrane-spanning segment. The Cytoplasmic portion of the chain corresponds to 217–239 (SYSYILSAILKKKSEKGRSKAFS). Residues 240–260 (TCSAHLLSVSLFYGTLFFMYV) form a helical membrane-spanning segment. The Extracellular segment spans residues 261-271 (SSRSGSAADQA). The helical transmembrane segment at 272-292 (KMYSLFYTIIIPLLNPFIYSL) threads the bilayer. Residues 293 to 307 (RNKEVIDALRRIMKK) are Cytoplasmic-facing.

Belongs to the G-protein coupled receptor 1 family.

The protein resides in the cell membrane. Its function is as follows. Odorant receptor. The chain is Olfactory receptor 5AC1 (OR5AC1) from Homo sapiens (Human).